We begin with the raw amino-acid sequence, 125 residues long: Succinate dehydrogenase hydrophobic membrane anchor subunit (125 aa).

Residues 1 to 24 (MTYDFRAEIVKAKNTGSAKSGSHH) lie on the Cytoplasmic side of the membrane. The chain crosses the membrane as a helical span at residues 25-45 (WLLQRITAIILVLCSLWLLYF). Topologically, residues 46-67 (TLANKNSDVNIIIWELKRPINL) are periplasmic. Residues 68 to 89 (IPLLIAVITSLYHAMLGMQVVI) form a helical membrane-spanning segment. A heme-binding site is contributed by His80. Residues 90–99 (EDYISCNKLR) are Cytoplasmic-facing. An a ubiquinone-binding site is contributed by Tyr92. Residues 100-123 (NTLIIAVKLFSILTIVAFIVAVFY) traverse the membrane as a helical segment.

As to quaternary structure, part of an enzyme complex containing four subunits: a flavoprotein, an iron-sulfur protein, plus two membrane-anchoring proteins, SdhC and SdhD. Heme serves as cofactor.

It localises to the cell inner membrane. It participates in carbohydrate metabolism; tricarboxylic acid cycle. Its function is as follows. Membrane-anchoring subunit of succinate dehydrogenase (SDH). In Rickettsia bellii (strain RML369-C), this protein is Succinate dehydrogenase hydrophobic membrane anchor subunit (sdhD).